Here is a 505-residue protein sequence, read N- to C-terminus: MALIEICLALVVIGYLIYKWSTATFKTFEERKLYFEKPYPFVGNMAAAALQKSSFQRQLTEFYERTRQHKLVGFFNMRTPMITLNDPELIKKVCVKDFDHFPNHQPFITSNDRLFNDMLSVMRDQRWKHMRNTLTPVFTAAKMRNMFTLMNESFAECLQHLDSSSKTLPGRKGFEVDMKVMCNKLSNDIIATTAFGLKVNSYDNPKNEFYEIGQSLVFSRGLQFFKFMLSTLVPKLFSLLKLTIFDSAKVDYFARLVVEAMQYREKHNITRPDMIQLLMEAKNESEDKWTDDEIVAQCFIFFFAAFENNSNLICTTTYELLYNPDVQERLYEEIVETKKALNGAPLTYDAVQKMTYMDMVISESLRKWTLAAATDRLCSKDYTLTDDDGTKLFDFKVGDRINIPISGLHLDDRYFPEPRKFDPDRFSEERKGDMVPYTYLPFGVGPRNCIGNRYALMQVKGMLFNLLLHYKIEASPRTIKDLWGSASGFNFTPRSGFWMHLVPRK.

A heme-binding site is contributed by Cys449.

This sequence belongs to the cytochrome P450 family. The cofactor is heme.

The protein localises to the endoplasmic reticulum membrane. The protein resides in the microsome membrane. Functionally, may be involved in the metabolism of insect hormones and in the breakdown of synthetic insecticides. The sequence is that of Cytochrome P450 9b2 (Cyp9b2) from Drosophila melanogaster (Fruit fly).